The primary structure comprises 55 residues: Large ribosomal subunit protein bL32 (55 aa).

The span at 1-23 shows a compositional bias: basic residues; it reads MAVPKKKTSKAKRDQRRAHWKRK. Residues 1 to 26 are disordered; sequence MAVPKKKTSKAKRDQRRAHWKRKATI.

Belongs to the bacterial ribosomal protein bL32 family.

This chain is Large ribosomal subunit protein bL32, found in Picosynechococcus sp. (strain ATCC 27264 / PCC 7002 / PR-6) (Agmenellum quadruplicatum).